The chain runs to 666 residues: Endogenous retrovirus group K member 24 Gag polyprotein (666 aa).

Gly-2 is lipidated: N-myristoyl glycine. The disordered stretch occupies residues Gly-165–Leu-264. Residues Gly-232–Pro-247 are compositionally biased toward pro residues. 2 CCHC-type zinc fingers span residues Gly-544–Val-561 and Asp-580–Ser-597. Residues Lys-598–Leu-641 form a disordered region. Positions Gln-604–Gly-622 are enriched in polar residues. The segment covering Phe-624–Pro-640 has biased composition (low complexity).

The protein belongs to the beta type-B retroviral Gag protein family. HERV class-II K(HML-2) gag subfamily. Post-translationally, myristoylation is essential for retroviral assembly. Alteration of the glycine residue leads to a block in the budding of particles and an accumulation of Gag inside the cell. In terms of processing, specific enzymatic cleavages may yield mature proteins.

The protein localises to the cell membrane. Its function is as follows. The products of the Gag polyproteins of infectious retroviruses perform highly complex orchestrated tasks during the assembly, budding, maturation, and infection stages of the viral replication cycle. During viral assembly, the proteins form membrane associations and self-associations that ultimately result in budding of an immature virion from the infected cell. Gag precursors also function during viral assembly to selectively bind and package two plus strands of genomic RNA. Endogenous Gag proteins may have kept, lost or modified their original function during evolution. The chain is Endogenous retrovirus group K member 24 Gag polyprotein (ERVK-24) from Homo sapiens (Human).